Consider the following 263-residue polypeptide: Neurogenin-2 (263 aa).

A disordered region spans residues 20-76 (LGSASPASATLTPMSSSADEEEDEELRRPGSARGQRGAEAEQGVQGSPASGAGGCRP). Positions 24–36 (SPASATLTPMSSS) are enriched in polar residues. The bHLH domain occupies 112 to 164 (TRRLKANNRERNRMHNLNAALDALREVLPTFPEDAKLTKIETLRFAHNYIWAL). The span at 197-231 (LGASGDSPSPPSSWSCTNSPASSSNSTSPYSCTLS) shows a compositional bias: low complexity. Residues 197–253 (LGASGDSPSPPSSWSCTNSPASSSNSTSPYSCTLSPASPGSDVDYWQPPPPEKHRYA) form a disordered region.

Efficient DNA binding requires dimerization with another bHLH protein.

It is found in the nucleus. Transcriptional regulator. Involved in neuronal differentiation. Activates transcription by binding to the E box (5'-CANNTG-3'). This Mus musculus (Mouse) protein is Neurogenin-2 (Neurog2).